The chain runs to 225 residues: Ethylene-responsive transcription factor 3 (225 aa).

Over residues 1–12 (MRRGRAAAAPAP) the composition is skewed to low complexity. Disordered stretches follow at residues 1–29 (MRRG…IRFR) and 82–193 (NFPL…NIAS). The AP2/ERF DNA-binding region spans 27–84 (RFRGVRKRPWGRFAAEIRDPWKKTRVWLGTFDSAEDAARAYDAAARALRGPKAKTNFP). Residues 118–134 (SQRPTSSSMSSTVESFS) show a composition bias toward low complexity. Residues 176-185 (DHGDCEKEND) are compositionally biased toward basic and acidic residues. Positions 202-208 (FDLNLPP) match the EAR-like (transcriptional repression) motif.

This sequence belongs to the ethylene-response factor family. Class 2 subfamily.

It localises to the nucleus. Transcription factor that binds to the GCC-box pathogenesis-related promoter element. Involved in the regulation of gene expression by stress factors and by components of stress signal transduction pathways. Probably acts as a transcriptional repressor and may regulate other AtERFs. The polypeptide is Ethylene-responsive transcription factor 3 (ERF3) (Nicotiana tabacum (Common tobacco)).